The chain runs to 469 residues: Aspartyl/glutamyl-tRNA(Asn/Gln) amidotransferase subunit B (469 aa).

Belongs to the GatB/GatE family. GatB subfamily. In terms of assembly, heterotrimer of A, B and C subunits.

It catalyses the reaction L-glutamyl-tRNA(Gln) + L-glutamine + ATP + H2O = L-glutaminyl-tRNA(Gln) + L-glutamate + ADP + phosphate + H(+). The catalysed reaction is L-aspartyl-tRNA(Asn) + L-glutamine + ATP + H2O = L-asparaginyl-tRNA(Asn) + L-glutamate + ADP + phosphate + 2 H(+). Allows the formation of correctly charged Asn-tRNA(Asn) or Gln-tRNA(Gln) through the transamidation of misacylated Asp-tRNA(Asn) or Glu-tRNA(Gln) in organisms which lack either or both of asparaginyl-tRNA or glutaminyl-tRNA synthetases. The reaction takes place in the presence of glutamine and ATP through an activated phospho-Asp-tRNA(Asn) or phospho-Glu-tRNA(Gln). This is Aspartyl/glutamyl-tRNA(Asn/Gln) amidotransferase subunit B from Methanococcus maripaludis (strain C5 / ATCC BAA-1333).